The following is a 120-amino-acid chain: Large ribosomal subunit protein uL18 (120 aa).

The protein belongs to the universal ribosomal protein uL18 family. Part of the 50S ribosomal subunit. Part of the 5S rRNA/L5/L18/L25 subcomplex. Contacts the 23S rRNA and 5S rRNA. Required for catalysis of RNase M5.

In terms of biological role, this is one of the proteins that bind and probably mediate the attachment of the 5S RNA into the large ribosomal subunit, where it forms part of the central protuberance. Its function is as follows. Required for correct processing of both the 5' and 3' ends of 5S rRNA precursor, which is does in conjunction with ribonuclease M5 (RNase M5, rnmV). Possibly folds the 5S rRNA precursor into the correct conformation, thus acting as a chaperone. The chain is Large ribosomal subunit protein uL18 from Bacillus subtilis (strain 168).